The primary structure comprises 348 residues: Dihydroorotase (348 aa).

Residues H17 and H19 each coordinate Zn(2+). Substrate is bound by residues 19-21 and N45; that span reads HLR. Residues K103, H140, and H178 each contribute to the Zn(2+) site. An N6-carboxylysine modification is found at K103. Substrate is bound at residue H140. L223 lines the substrate pocket. D251 is a binding site for Zn(2+). The active site involves D251. Residues H255 and A267 each contribute to the substrate site.

It belongs to the metallo-dependent hydrolases superfamily. DHOase family. Class II DHOase subfamily. In terms of assembly, homodimer. Zn(2+) serves as cofactor.

The enzyme catalyses (S)-dihydroorotate + H2O = N-carbamoyl-L-aspartate + H(+). It functions in the pathway pyrimidine metabolism; UMP biosynthesis via de novo pathway; (S)-dihydroorotate from bicarbonate: step 3/3. Catalyzes the reversible cyclization of carbamoyl aspartate to dihydroorotate. The sequence is that of Dihydroorotase from Salmonella paratyphi C (strain RKS4594).